The following is a 420-amino-acid chain: Glutamyl-tRNA reductase (420 aa).

Residues 49 to 52, Ser-109, 114 to 116, and Gln-120 each bind substrate; these read TCNR and EPQ. Cys-50 serves as the catalytic Nucleophile. Residue 189–194 coordinates NADP(+); it reads GAGETI.

It belongs to the glutamyl-tRNA reductase family. In terms of assembly, homodimer.

It catalyses the reaction (S)-4-amino-5-oxopentanoate + tRNA(Glu) + NADP(+) = L-glutamyl-tRNA(Glu) + NADPH + H(+). It functions in the pathway porphyrin-containing compound metabolism; protoporphyrin-IX biosynthesis; 5-aminolevulinate from L-glutamyl-tRNA(Glu): step 1/2. In terms of biological role, catalyzes the NADPH-dependent reduction of glutamyl-tRNA(Glu) to glutamate 1-semialdehyde (GSA). The sequence is that of Glutamyl-tRNA reductase from Proteus mirabilis (strain HI4320).